Consider the following 213-residue polypeptide: Octanoyltransferase (213 aa).

In terms of domain architecture, BPL/LPL catalytic spans 32–207; it reads ESTLDEIWLV…NILALLNNPD (176 aa). Substrate contacts are provided by residues 71–78, 138–140, and 151–153; these read RGGQVTYH, SLG, and GLA. The Acyl-thioester intermediate role is filled by cysteine 169.

It belongs to the LipB family.

Its subcellular location is the cytoplasm. The enzyme catalyses octanoyl-[ACP] + L-lysyl-[protein] = N(6)-octanoyl-L-lysyl-[protein] + holo-[ACP] + H(+). Its pathway is protein modification; protein lipoylation via endogenous pathway; protein N(6)-(lipoyl)lysine from octanoyl-[acyl-carrier-protein]: step 1/2. Catalyzes the transfer of endogenously produced octanoic acid from octanoyl-acyl-carrier-protein onto the lipoyl domains of lipoate-dependent enzymes. Lipoyl-ACP can also act as a substrate although octanoyl-ACP is likely to be the physiological substrate. This Escherichia coli (strain SMS-3-5 / SECEC) protein is Octanoyltransferase.